The following is a 480-amino-acid chain: Vacuolar amino acid transporter 2 (480 aa).

Positions 21 to 48 (LTNFPFPGTTDNDSDDGSQGQNSLNIIT) are disordered. Residues 37–46 (GSQGQNSLNI) are compositionally biased toward polar residues. The next 9 membrane-spanning stretches (helical) occupy residues 72–92 (AFMNLANSILGAGIITQPFAI), 95–115 (AGILGGLLSYVALGFIVDWTL), 145–165 (LILFTNGLFAFGGCIGYCIII), 214–234 (LSKASFLAVISMIIIVLTVVI), 263–283 (LSVISFALVCHHNTSFIFFSM), 297–317 (ISIIISVICCALMGYSGFAVF), 338–358 (IARLCFGFNMLTTFPMEIFVL), 394–414 (VFITMGISLTTCNLGALFELI), and 447–467 (FYLCICFGFMIMIISSTQTII).

This sequence belongs to the amino acid/polyamine transporter 2 family.

The protein resides in the vacuole membrane. Probable amino acid transporter of unknown specificity. The chain is Vacuolar amino acid transporter 2 (AVT2) from Saccharomyces cerevisiae (strain ATCC 204508 / S288c) (Baker's yeast).